A 1175-amino-acid chain; its full sequence is Potassium/sodium hyperpolarization-activated cyclic nucleotide-gated channel 4 (1175 aa).

Over 1–259 (MDKLPPSMRK…SAGFWIIHPY (259 aa)) the chain is Cytoplasmic. The disordered stretch occupies residues 17-186 (QQVGAKAWIM…SSCGEQRPAD (170 aa)). A compositionally biased stretch (acidic residues) spans 26–36 (MDEEEDAEEEG). A compositionally biased stretch (low complexity) spans 60–75 (PSAAAAAAGGAESRGA). Gly residues predominate over residues 111–126 (SRGGGGGGGSTGGGSH). The segment covering 128 to 140 (HLHDSAEERRLIA) has biased composition (basic and acidic residues). S145 is subject to Phosphoserine. The segment covering 162 to 175 (PGAPAPPAASPPQV) has biased composition (pro residues). A helical transmembrane segment spans residues 260–288 (SDFRFYWDLTMLLLMVGNLIIIPVGITFF). Topologically, residues 289–292 (KDEN) are extracellular. A helical membrane pass occupies residues 293 to 316 (TTPWIVFNVVSDTFFLIDLVLNFR). Residues 317-329 (TGIVVEDNTDIIL) are Cytoplasmic-facing. The chain crosses the membrane as a helical span at residues 330–352 (DPRRIKMKYLKSWFVVDFVSSIP). Over 353–374 (VDYIFLIVETRIDSEVYKTARA) the chain is Extracellular. The chain crosses the membrane as a helical; Voltage-sensor span at residues 375–410 (LRIVRFTKILSLLRLLRLSRLIRYIHQWEEIFHMTY). Topologically, residues 411–413 (DLA) are cytoplasmic. Residues 414-444 (SAVVRIVNLIGMMLLLCHWDGCLQFLVPMLQ) form a helical membrane-spanning segment. At 445 to 449 (DFPDD) the chain is on the extracellular side. An intramembrane region (pore-forming) is located at residues 450-478 (CWVSLNNMVNNSWGKQYSYALFKAMSHML). Residues 479–488 (CIGYGRQAPM) are Extracellular-facing. The helical transmembrane segment at 489–521 (GMSDVWLTMLSMIVGATCYAMFIGHATALIQSL) threads the bilayer. The Cytoplasmic portion of the chain corresponds to 522–1175 (DSSRRQYQEK…PVRSKLPSNL (654 aa)). 3',5'-cyclic GMP-binding residues include Y560, K563, F565, and E567. G660, E661, C663, R670, T671, V674, and R711 together coordinate 3',5'-cyclic AMP. 2 disordered regions span residues 801–820 (AIFRPPPGPTTLGSLGAGQT) and 830–1175 (LAPS…PSNL). Composition is skewed to low complexity over residues 839–854 (SPASSPSQPDTPSSAS), 900–912 (LGGSLSSSDSPLL), 948–966 (SPTSSPGQLGQPPGELSPG), and 984–1004 (RLPFAAGASAGASPVAFSPRG). Positions 1038 to 1050 (ASSPPPPPPPPAP) are enriched in pro residues. S1089 and S1093 each carry phosphoserine. Pro residues predominate over residues 1102–1114 (PPFPRAPGRPPGA).

It belongs to the potassium channel HCN family. In terms of assembly, homotetramer. The channel is composed of a homo- or heterotetrameric complex of pore-forming subunits. Interacts with PEX5L with a 4:4 HCN4:PEX5L stoichiometry; reduces the effects of cAMP on the voltage-dependence and rate of activation. Interacts with IRAG1; regulates HCN4 channel activity. Interacts with IRAG2; regulates HCN4 channel activity. Post-translationally, S-palmitoylated. Highly expressed in the heart sinoatrial node (SAN). Not detected in atrium, ventricle, forebrain or cerebellum. Detected at very low levels in total brain.

The protein localises to the cell membrane. The catalysed reaction is K(+)(in) = K(+)(out). It carries out the reaction Na(+)(in) = Na(+)(out). Its activity is regulated as follows. Activated by cAMP and to a lesser extent by cGMP and cCMP. cAMP binding causes a conformation change that leads to the assembly of an active tetramer and channel opening by shifting the voltage-dependency towards more positive voltages. Binding of cAMP removes a tonic inhibition conferred by cyclic nucleotide-binding domain (CNBD) on channel opening. Cyclic dinucleotides can modulate HCN4 channel; cyclic dinucleotides acting as potent antagonists of cAMP. Inhibited by extracellular Cs(+) ions. Auxiliary subunits can also regulate HCN4 channel. IRAG1 causes a gain-of-function by shifting HCN4 activation to more depolarized membrane potentials in the absence of cAMP. In contrast, IRAG2 causes a loss-of-function by inhibiting cAMP-dependent potentiation of HCN4 activation. Its function is as follows. Hyperpolarization-activated ion channel that are permeable to Na(+) and K(+) ions with very slow activation and inactivation. Exhibits higher selectivity for K(+) over Na(+) ions. Contributes to the native pacemaker currents in heart (If) that regulate the rhythm of heart beat. Contributes to the native pacemaker currents in neurons (Ih). May mediate responses to sour stimuli. This Oryctolagus cuniculus (Rabbit) protein is Potassium/sodium hyperpolarization-activated cyclic nucleotide-gated channel 4 (HCN4).